The following is a 196-amino-acid chain: Holliday junction branch migration complex subunit RuvA (196 aa).

The interval 1–63 (MISFVSGRVA…EDSLTLYGFA (63 aa)) is domain I. Positions 64-136 (DDDERTVFEL…LKDRLGTPST (73 aa)) are domain II. The interval 136–140 (TAAAE) is flexible linker. A domain III region spans residues 141–196 (STSGWRDAVHAGLLNLGYTARQADEAIAAIAGELDDSAAVDTATALRLALATLKRP).

It belongs to the RuvA family. In terms of assembly, homotetramer. Forms an RuvA(8)-RuvB(12)-Holliday junction (HJ) complex. HJ DNA is sandwiched between 2 RuvA tetramers; dsDNA enters through RuvA and exits via RuvB. An RuvB hexamer assembles on each DNA strand where it exits the tetramer. Each RuvB hexamer is contacted by two RuvA subunits (via domain III) on 2 adjacent RuvB subunits; this complex drives branch migration. In the full resolvosome a probable DNA-RuvA(4)-RuvB(12)-RuvC(2) complex forms which resolves the HJ.

The protein resides in the cytoplasm. In terms of biological role, the RuvA-RuvB-RuvC complex processes Holliday junction (HJ) DNA during genetic recombination and DNA repair, while the RuvA-RuvB complex plays an important role in the rescue of blocked DNA replication forks via replication fork reversal (RFR). RuvA specifically binds to HJ cruciform DNA, conferring on it an open structure. The RuvB hexamer acts as an ATP-dependent pump, pulling dsDNA into and through the RuvAB complex. HJ branch migration allows RuvC to scan DNA until it finds its consensus sequence, where it cleaves and resolves the cruciform DNA. This Acidothermus cellulolyticus (strain ATCC 43068 / DSM 8971 / 11B) protein is Holliday junction branch migration complex subunit RuvA.